The following is a 719-amino-acid chain: DNA ligase (719 aa).

NAD(+) contacts are provided by residues 42–46 (DAAYD), 92–93 (SL), and Glu126. Lys128 acts as the N6-AMP-lysine intermediate in catalysis. NAD(+) contacts are provided by Arg149, Glu185, Lys301, and Lys325. Positions 430, 433, 448, and 454 each coordinate Zn(2+). The 80-residue stretch at 640–719 (ATGSPVEGKT…DDWFKLVGED (80 aa)) folds into the BRCT domain.

The protein belongs to the NAD-dependent DNA ligase family. LigA subfamily. The cofactor is Mg(2+). Requires Mn(2+) as cofactor.

It carries out the reaction NAD(+) + (deoxyribonucleotide)n-3'-hydroxyl + 5'-phospho-(deoxyribonucleotide)m = (deoxyribonucleotide)n+m + AMP + beta-nicotinamide D-nucleotide.. Functionally, DNA ligase that catalyzes the formation of phosphodiester linkages between 5'-phosphoryl and 3'-hydroxyl groups in double-stranded DNA using NAD as a coenzyme and as the energy source for the reaction. It is essential for DNA replication and repair of damaged DNA. The polypeptide is DNA ligase (Brucella suis biovar 1 (strain 1330)).